A 125-amino-acid polypeptide reads, in one-letter code: Small ribosomal subunit protein eS8 (125 aa).

The tract at residues 1–20 (MLWQGESIRKVTGGRRRPAQ) is disordered.

The protein belongs to the eukaryotic ribosomal protein eS8 family. Part of the 30S ribosomal subunit.

This Methanoregula boonei (strain DSM 21154 / JCM 14090 / 6A8) protein is Small ribosomal subunit protein eS8.